The chain runs to 612 residues: Zinc metalloproteinase nas-36 (612 aa).

Positions 1–16 (MLLLVLLFVFISATNA) are cleaved as a signal peptide. Asparagine 15 is a glycosylation site (N-linked (GlcNAc...) asparagine). Positions 17–122 (SDVGRRELEK…KSKPNVRGRR (106 aa)) are excised as a propeptide. Residues 123–320 (SFDASPESKW…IETINKAYCS (198 aa)) form the Peptidase M12A domain. Asparagine 163 carries N-linked (GlcNAc...) asparagine glycosylation. Intrachain disulfides connect cysteine 166/cysteine 319, cysteine 190/cysteine 209, cysteine 329/cysteine 343, cysteine 345/cysteine 354, cysteine 365/cysteine 394, cysteine 515/cysteine 546, cysteine 519/cysteine 551, and cysteine 531/cysteine 536. Residue histidine 217 participates in Zn(2+) binding. Residue glutamate 218 is part of the active site. Zn(2+) is bound by residues histidine 221 and histidine 227. Residues 320–355 (SDRCSGSNDCKNGGYPHPKQCDTCLCPNGLSGPKCE) form the EGF-like domain. Residues 365–478 (CGGKIVVKEE…VGFKLQARAT (114 aa)) enclose the CUB domain. The TSP type-1 domain occupies 503 to 552 (TDQWAEWGSWSQCSRSCGGCGIMSRVRVCRTKQCKGRRQEFSTCNLKACP).

Requires Zn(2+) as cofactor.

The protein resides in the secreted. Its activity is regulated as follows. Inhibited by 1,10-phenanthroline. In terms of biological role, metalloprotease. Involved in molting, a process during larval stages in which a new cuticle is formed and the old cuticle is shed. The sequence is that of Zinc metalloproteinase nas-36 from Haemonchus contortus (Barber pole worm).